Reading from the N-terminus, the 54-residue chain is Ovomucoid (54 aa).

One can recognise a Kazal-like domain in the interval 4–54 (VDCSEYPKPVCSPEYMPLCGSDSKTYNNKCDFCSAVVESNGTLTLGHFGKC). 3 cysteine pairs are disulfide-bonded: cysteine 6–cysteine 36, cysteine 14–cysteine 33, and cysteine 22–cysteine 54. N-linked (GlcNAc...) asparagine glycosylation occurs at asparagine 43.

Its subcellular location is the secreted. The protein is Ovomucoid of Casuarius casuarius (Southern cassowary).